A 472-amino-acid chain; its full sequence is Eukaryotic translation initiation factor 2 subunit 3 (472 aa).

Alanine 2 bears the N-acetylalanine mark. A Phosphoserine modification is found at serine 16. The tr-type G domain occupies 39–248; it reads QATINIGTIG…IVKKIPVPPR (210 aa). The tract at residues 48–55 is G1; sequence GHVAHGKS. Residue 51-56 coordinates GTP; the sequence is AHGKST. A G2 region spans residues 76 to 80; the sequence is NITIK. Positions 134-137 are G3; sequence DCPG. Residues 190 to 193 and 225 to 227 each bind GTP; these read NKID and SAQ. The interval 190–193 is G4; that stretch reads NKID. Positions 225-227 are G5; sequence SAQ. The interacts with CDC123 stretch occupies residues 457–469; it reads GQIRRGVTIKPTV.

This sequence belongs to the TRAFAC class translation factor GTPase superfamily. Classic translation factor GTPase family. EIF2G subfamily. In terms of assembly, eukaryotic translation initiation factor 2 eIF2 is a heterotrimeric complex composed of an alpha (EIF2S1), a beta (EIF2S2) and a gamma (EIF2S3) chain. eIF2 is member of the 43S pre-initiation complex (43S PIC). Interacts (via C-terminus) with CDC123; the interaction is direct.

It localises to the cytoplasm. Its subcellular location is the cytosol. The enzyme catalyses GTP + H2O = GDP + phosphate + H(+). Functionally, member of the eIF2 complex that functions in the early steps of protein synthesis by forming a ternary complex with GTP and initiator tRNA. This complex binds to a 40S ribosomal subunit, followed by mRNA binding to form the 43S pre-initiation complex (43S PIC). Junction of the 60S ribosomal subunit to form the 80S initiation complex is preceded by hydrolysis of the GTP bound to eIF2 and release of an eIF2-GDP binary complex. In order for eIF2 to recycle and catalyze another round of initiation, the GDP bound to eIF2 must exchange with GTP by way of a reaction catalyzed by eIF-2B. The chain is Eukaryotic translation initiation factor 2 subunit 3 (EIF2S3) from Pongo abelii (Sumatran orangutan).